The chain runs to 2564 residues: Histone-lysine N-methyltransferase SETD2 (2564 aa).

Residues 1–11 (MKQLQPQPPPK) show a composition bias toward pro residues. Residues 1–30 (MKQLQPQPPPKMGDFYDPEHPTPEEEENEA) form a disordered region. Over residues 17-30 (DPEHPTPEEEENEA) the composition is skewed to basic and acidic residues. S131 is subject to Phosphoserine. Disordered regions lie at residues 180-211 (STTVDSPPSSPPPPPPPAQATTLSSPAPVTEP), 272-561 (NEQA…TLSK), and 607-626 (PEREKAGSPAPSNRLNDSPT). The segment covering 187–197 (PSSPPPPPPPA) has biased composition (pro residues). Over residues 198 to 207 (QATTLSSPAP) the composition is skewed to low complexity. The span at 278 to 290 (SSKKEDSHIGKDE) shows a compositional bias: basic and acidic residues. Residues S321, S323, and S344 each carry the phosphoserine modification. Basic and acidic residues-rich tracts occupy residues 335-400 (RSHD…ERER), 421-432 (RSERSHYYDSDR), 439-467 (PYRERTRYSRPYTDNRARESSDSEEEYKK), and 479-528 (SYRD…EAIK). Residue K359 forms a Glycyl lysine isopeptide (Lys-Gly) (interchain with G-Cter in SUMO2) linkage. S422 bears the Phosphoserine mark. Phosphoserine occurs at positions 532, 614, and 624. Residues 616–625 (APSNRLNDSP) are compositionally biased toward polar residues. Phosphothreonine is present on T626. A Glycyl lysine isopeptide (Lys-Gly) (interchain with G-Cter in SUMO2) cross-link involves residue K637. A phosphoserine mark is found at S698, S708, S744, and S754. K776 participates in a covalent cross-link: Glycyl lysine isopeptide (Lys-Gly) (interchain with G-Cter in SUMO2). Disordered regions lie at residues 964 to 995 (EEGNSILPERRGRPEISLDERGEGGHVHTSDD), 1036 to 1101 (EDYS…SDHW), 1133 to 1233 (LHKG…LGKT), 1264 to 1352 (QEKP…FSDQ), and 1393 to 1443 (LEKN…PGSA). The segment covering 971 to 994 (PERRGRPEISLDERGEGGHVHTSD) has biased composition (basic and acidic residues). Positions 1045–1058 (SNDESDSEDTDSDD) are enriched in acidic residues. The span at 1084–1095 (SPCSSRSSQSYR) shows a compositional bias: low complexity. Phosphoserine is present on S1098. A compositionally biased stretch (polar residues) spans 1162-1171 (HPQSDGVDST). Residues 1172–1191 (SHTDVKSDPLGHPNSEETVK) show a composition bias toward basic and acidic residues. Residues 1215-1225 (KSWQQTTFQNR) are compositionally biased toward polar residues. Position 1228 is a phosphoserine (S1228). Residues 1265–1276 (EKPSTTYQQPDS) show a composition bias toward polar residues. Basic and acidic residues predominate over residues 1393–1403 (LEKNDIKDRGP). A phosphoserine mark is found at S1413, S1415, and S1417. The interaction with TUBA1A stretch occupies residues 1418–1714 (DGELQDRKKV…KKERSRKKDS (297 aa)). The span at 1421–1431 (LQDRKKVRVEV) shows a compositional bias: basic and acidic residues. The AWS domain occupies 1494-1548 (IKRMQCECTPLSKDERAQGEIACGEDCLNRLLMIECSSRCPNGDYCSNRRFQRKQ). Zn(2+)-binding residues include C1499, C1501, C1516, C1520, C1529, C1533, and C1539. The SET domain maps to 1550–1667 (ADVEVILTEK…SGSELTFDYQ (118 aa)). Residues 1560–1562 (KGW), 1603–1605 (HYY), and 1628–1629 (NH) each bind S-adenosyl-L-methionine. C1631 serves as a coordination point for Zn(2+). Positions 1674–1690 (EAQKCFCGSANCRGYLG) constitute a Post-SET domain. Q1676 provides a ligand contact to S-adenosyl-L-methionine. Residue C1678 coordinates Zn(2+). F1679 serves as a coordination point for S-adenosyl-L-methionine. Residues C1680 and C1685 each contribute to the Zn(2+) site. S1696, S1844, and S1845 each carry phosphoserine. The tract at residues 1831 to 1872 (KTAVPPLSEGDGYSSENTSRAHTPLNTPDPSTKLSTEADTDT) is disordered. A compositionally biased stretch (polar residues) spans 1844-1867 (SSENTSRAHTPLNTPDPSTKLSTE). Phosphothreonine occurs at positions 1853 and 1872. Residue S1888 is modified to Phosphoserine. The disordered stretch occupies residues 1921–2142 (EELQSQQLLP…EAQKQQQQMQ (222 aa)). Over residues 1924 to 1935 (QSQQLLPQQLPE) the composition is skewed to low complexity. A Phosphoserine modification is found at S1952. The segment covering 1960-1972 (IEPKESNGTKLEE) has biased composition (basic and acidic residues). The span at 1973-1990 (PINEETPSQDEEEGVSDV) shows a compositional bias: acidic residues. Residues S1980, S1988, and S1995 each carry the phosphoserine modification. 3 stretches are compositionally biased toward basic and acidic residues: residues 1991-2004 (ESERSQEQPDKTVD), 2014-2046 (DSWKDLKEVYRIPKKSQTEKENTTTERGRDAVG), and 2059-2072 (RSRERDPDKQTQNK). Residues S2080 and S2082 each carry the phosphoserine modification. 2 stretches are compositionally biased toward basic and acidic residues: residues 2090–2100 (RGTKRPDDRYD) and 2111–2135 (KDRNKLSTEERRKLFEQEVAQREAQ). The stretch at 2117 to 2146 (STEERRKLFEQEVAQREAQKQQQQMQNLGM) forms a coiled coil. The interval 2137-2366 (QQQQMQNLGM…APGQPQPLQP (230 aa)) is low charge region. Positions 2389-2422 (IVLPPNWKTARDPEGKIYYYHVITRQTQWDPPTW) constitute a WW domain. The tract at residues 2439-2465 (LGTPTYDENPMKASKKPKTAEADTSSE) is disordered. Residues 2457-2564 (TAEADTSSEL…YKPKEDTELE (108 aa)) are interaction with POLR2A.

The protein belongs to the class V-like SAM-binding methyltransferase superfamily. Histone-lysine methyltransferase family. SET2 subfamily. Specifically interacts with hyperphosphorylated C-terminal domain (CTD) of RNA polymerase II large subunit (POLR2A): binds to CTD heptad repeats doubly phosphorylated on 'Ser-2' and 'Ser-5' of each heptad. Interacts with HTT. Interacts with IWS1. Interacts with p53/TP53; leading to regulate p53/TP53 target genes. Component of a complex with HNRNPL. Interacts with TUBA1A; the interaction is independent on alpha-tubulin acetylation on 'Lys-40'. Interacts with STAT1. In terms of processing, may be automethylated. As to expression, ubiquitously expressed.

It is found in the nucleus. Its subcellular location is the chromosome. It carries out the reaction L-lysyl(36)-[histone H3] + 3 S-adenosyl-L-methionine = N(6),N(6),N(6)-trimethyl-L-lysyl(36)-[histone H3] + 3 S-adenosyl-L-homocysteine + 3 H(+). It catalyses the reaction L-lysyl-[protein] + S-adenosyl-L-methionine = N(6)-methyl-L-lysyl-[protein] + S-adenosyl-L-homocysteine + H(+). The catalysed reaction is L-lysyl-[protein] + 3 S-adenosyl-L-methionine = N(6),N(6),N(6)-trimethyl-L-lysyl-[protein] + 3 S-adenosyl-L-homocysteine + 3 H(+). Specifically inhibited by sinefungin derivatives. N-propyl sinefungin (Pr-SNF) interacts preferentially with SETD2. Histone methyltransferase that specifically trimethylates 'Lys-36' of histone H3 (H3K36me3) using dimethylated 'Lys-36' (H3K36me2) as substrate. It is capable of trimethylating unmethylated H3K36 (H3K36me0) in vitro. Represents the main enzyme generating H3K36me3, a specific tag for epigenetic transcriptional activation. Plays a role in chromatin structure modulation during elongation by coordinating recruitment of the FACT complex and by interacting with hyperphosphorylated POLR2A. Acts as a key regulator of DNA mismatch repair in G1 and early S phase by generating H3K36me3, a mark required to recruit MSH6 subunit of the MutS alpha complex: early recruitment of the MutS alpha complex to chromatin to be replicated allows a quick identification of mismatch DNA to initiate the mismatch repair reaction. Required for DNA double-strand break repair in response to DNA damage: acts by mediating formation of H3K36me3, promoting recruitment of RAD51 and DNA repair via homologous recombination (HR). Acts as a tumor suppressor. H3K36me3 also plays an essential role in the maintenance of a heterochromatic state, by recruiting DNA methyltransferase DNMT3A. H3K36me3 is also enhanced in intron-containing genes, suggesting that SETD2 recruitment is enhanced by splicing and that splicing is coupled to recruitment of elongating RNA polymerase. Required during angiogenesis. Required for endoderm development by promoting embryonic stem cell differentiation toward endoderm: acts by mediating formation of H3K36me3 in distal promoter regions of FGFR3, leading to regulate transcription initiation of FGFR3. In addition to histones, also mediates methylation of other proteins, such as tubulins and STAT1. Trimethylates 'Lys-40' of alpha-tubulins such as TUBA1B (alpha-TubK40me3); alpha-TubK40me3 is required for normal mitosis and cytokinesis and may be a specific tag in cytoskeletal remodeling. Involved in interferon-alpha-induced antiviral defense by mediating both monomethylation of STAT1 at 'Lys-525' and catalyzing H3K36me3 on promoters of some interferon-stimulated genes (ISGs) to activate gene transcription. Functionally, (Microbial infection) Recruited to the promoters of adenovirus 12 E1A gene in case of infection, possibly leading to regulate its expression. In Homo sapiens (Human), this protein is Histone-lysine N-methyltransferase SETD2 (SETD2).